The chain runs to 203 residues: MILITSGAEAEIYESENMIIKRRVKKNYRIDELDSMLNKTRTKREVNIIKKLNALNIPSPMFYTTNKYDIVMEKIKGIPVKNILNNESLTSNQFLNKICAKTHKDILIEIGNIVYAMHNNNIIHGDLTTLNFIYSDKIHIIDFGLSFYSNKDEDKAVDLYLFEKSLISVHNEEFVSYFYSGYIVNETLNKKLLEIRKRGRKRE.

Residues 1-203 (MILITSGAEA…EIRKRGRKRE (203 aa)) enclose the Protein kinase domain. ATP is bound by residues 4 to 12 (ITSGAEAEI) and lysine 26. Aspartate 126 serves as the catalytic Proton acceptor.

Belongs to the protein kinase superfamily. BUD32 family. In terms of assembly, component of the EKC/KEOPS complex composed of at least BUD32, CGI121, GON7, KAE1 and PCC1; the whole complex dimerizes.

The protein localises to the cytoplasm. Its subcellular location is the nucleus. It is found in the chromosome. The protein resides in the telomere. It catalyses the reaction L-seryl-[protein] + ATP = O-phospho-L-seryl-[protein] + ADP + H(+). The catalysed reaction is L-threonyl-[protein] + ATP = O-phospho-L-threonyl-[protein] + ADP + H(+). Its function is as follows. Component of the EKC/KEOPS complex that is required for the formation of a threonylcarbamoyl group on adenosine at position 37 (t(6)A37) in tRNAs that read codons beginning with adenine. The complex is probably involved in the transfer of the threonylcarbamoyl moiety of threonylcarbamoyl-AMP (TC-AMP) to the N6 group of A37. BUD32 has ATPase activity in the context of the EKC/KEOPS complex and likely plays a supporting role to the catalytic subunit KAE1. The EKC/KEOPS complex also promotes both telomere uncapping and telomere elongation. The complex is required for efficient recruitment of transcriptional coactivators. This Enterocytozoon bieneusi (strain H348) (Microsporidian parasite) protein is EKC/KEOPS complex subunit BUD32 (BUD32).